A 274-amino-acid chain; its full sequence is Large ribosomal subunit protein uL2 (274 aa).

Residues 222 to 274 are disordered; sequence GVAMNPVDHPHGGGEGRGKGHHPQSPWGQLAKGYKTRRGKKASDKLIVRRRNG. A compositionally biased stretch (basic and acidic residues) spans 229–239; sequence DHPHGGGEGRG.

It belongs to the universal ribosomal protein uL2 family. In terms of assembly, part of the 50S ribosomal subunit. Forms a bridge to the 30S subunit in the 70S ribosome.

One of the primary rRNA binding proteins. Required for association of the 30S and 50S subunits to form the 70S ribosome, for tRNA binding and peptide bond formation. It has been suggested to have peptidyltransferase activity; this is somewhat controversial. Makes several contacts with the 16S rRNA in the 70S ribosome. The chain is Large ribosomal subunit protein uL2 from Thermosipho melanesiensis (strain DSM 12029 / CIP 104789 / BI429).